We begin with the raw amino-acid sequence, 113 residues long: Protein Wnt-10 (113 aa).

Ser-1 is lipidated: O-palmitoleoyl serine; by PORCN. Residues Cys-79 and Cys-94 are joined by a disulfide bond.

This sequence belongs to the Wnt family. In terms of processing, palmitoleoylation is required for efficient binding to frizzled receptors. Depalmitoleoylation leads to Wnt signaling pathway inhibition.

The protein resides in the secreted. The protein localises to the extracellular space. It localises to the extracellular matrix. Its function is as follows. Ligand for members of the frizzled family of seven transmembrane receptors. Probable developmental protein. May be a signaling molecule which affects the development of discrete regions of tissues. Is likely to signal over only few cell diameters. The polypeptide is Protein Wnt-10 (WNT-10) (Eptatretus stoutii (Pacific hagfish)).